The chain runs to 181 residues: Cytochrome c oxidase subunit 2 (181 aa).

Positions 126, 128, 130, 134, and 137 each coordinate Cu cation. Glu-128 is a Mg(2+) binding site.

The protein belongs to the cytochrome c oxidase subunit 2 family. As to quaternary structure, component of the cytochrome c oxidase (complex IV, CIV), a multisubunit enzyme composed of a catalytic core of 3 subunits and several supernumerary subunits. The complex exists as a monomer or a dimer and forms supercomplexes (SCs) in the inner mitochondrial membrane with ubiquinol-cytochrome c oxidoreductase (cytochrome b-c1 complex, complex III, CIII). Requires Cu cation as cofactor.

The protein resides in the mitochondrion inner membrane. The enzyme catalyses 4 Fe(II)-[cytochrome c] + O2 + 8 H(+)(in) = 4 Fe(III)-[cytochrome c] + 2 H2O + 4 H(+)(out). In terms of biological role, component of the cytochrome c oxidase, the last enzyme in the mitochondrial electron transport chain which drives oxidative phosphorylation. The respiratory chain contains 3 multisubunit complexes succinate dehydrogenase (complex II, CII), ubiquinol-cytochrome c oxidoreductase (cytochrome b-c1 complex, complex III, CIII) and cytochrome c oxidase (complex IV, CIV), that cooperate to transfer electrons derived from NADH and succinate to molecular oxygen, creating an electrochemical gradient over the inner membrane that drives transmembrane transport and the ATP synthase. Cytochrome c oxidase is the component of the respiratory chain that catalyzes the reduction of oxygen to water. Electrons originating from reduced cytochrome c in the intermembrane space (IMS) are transferred via the dinuclear copper A center (CU(A)) of subunit 2 and heme A of subunit 1 to the active site in subunit 1, a binuclear center (BNC) formed by heme A3 and copper B (CU(B)). The BNC reduces molecular oxygen to 2 water molecules using 4 electrons from cytochrome c in the IMS and 4 protons from the mitochondrial matrix. The chain is Cytochrome c oxidase subunit 2 (COII) from Paramecium primaurelia.